Reading from the N-terminus, the 284-residue chain is Four and a half LIM domains protein 5 (284 aa).

The segment at 8–32 adopts a C4-type zinc-finger fold; it reads CQYCTASLLGKKYVLKDDSPYCVTC. LIM zinc-binding domains are found at residues 39 to 100, 101 to 160, 161 to 220, and 223 to 283; these read NYCE…ECSS, KCFH…KEFA, HYCN…LYAN, and VACS…MDTD.

In terms of assembly, interacts with CREM (via the third LIM domain). Interacts (via second LIM domain) with SPAG8. As to expression, testis-specific (at protein level).

The protein resides in the nucleus. In terms of biological role, may be involved in the regulation of spermatogenesis. Stimulates CREM transcriptional activity in a phosphorylation-independent manner. In Homo sapiens (Human), this protein is Four and a half LIM domains protein 5 (FHL5).